Here is a 380-residue protein sequence, read N- to C-terminus: Acid phosphatase-like protein XcAP-3 (380 aa).

The signal sequence occupies residues 1 to 19 (MKATILLFLVLAVVQLSTA). Intrachain disulfides connect Cys147-Cys374, Cys167-Cys221, and Cys347-Cys351.

It belongs to the histidine acid phosphatase family.

The protein localises to the secreted. Functionally, probably modulates blood feeding of fleas on vertebrate species by binding and sequestering different mediators involved in the host response. Binds histamine. Binds leukotriene C4. Does not bind serotonin, adrenaline, noradrenaline, leukotriene B4, leukotriene D4, leukotriene E4, ADP, and stable analogs of thromboxane A2: U-46619 and cTXA2. This Xenopsylla cheopis (Oriental rat flea) protein is Acid phosphatase-like protein XcAP-3.